The following is a 118-amino-acid chain: Large ribosomal subunit protein bL20 (118 aa).

The protein belongs to the bacterial ribosomal protein bL20 family.

Functionally, binds directly to 23S ribosomal RNA and is necessary for the in vitro assembly process of the 50S ribosomal subunit. It is not involved in the protein synthesizing functions of that subunit. In Shigella flexneri serotype 5b (strain 8401), this protein is Large ribosomal subunit protein bL20.